A 700-amino-acid chain; its full sequence is Elongation factor G (700 aa).

A tr-type G domain is found at 8-290 (DKYRNIGISA…AVVELLPSPL (283 aa)). Residues 17–24 (AHIDAGKT), 88–92 (DTPGH), and 142–145 (NKMD) contribute to the GTP site.

This sequence belongs to the TRAFAC class translation factor GTPase superfamily. Classic translation factor GTPase family. EF-G/EF-2 subfamily.

The protein localises to the cytoplasm. Functionally, catalyzes the GTP-dependent ribosomal translocation step during translation elongation. During this step, the ribosome changes from the pre-translocational (PRE) to the post-translocational (POST) state as the newly formed A-site-bound peptidyl-tRNA and P-site-bound deacylated tRNA move to the P and E sites, respectively. Catalyzes the coordinated movement of the two tRNA molecules, the mRNA and conformational changes in the ribosome. This Polynucleobacter necessarius subsp. necessarius (strain STIR1) protein is Elongation factor G.